The following is a 276-amino-acid chain: Hydroxyethylthiazole kinase (276 aa).

Residues Arg126 and Ser172 each contribute to the ATP site. Residue Gly199 participates in substrate binding.

The protein belongs to the Thz kinase family. The cofactor is Mg(2+).

It carries out the reaction 5-(2-hydroxyethyl)-4-methylthiazole + ATP = 4-methyl-5-(2-phosphooxyethyl)-thiazole + ADP + H(+). It functions in the pathway cofactor biosynthesis; thiamine diphosphate biosynthesis; 4-methyl-5-(2-phosphoethyl)-thiazole from 5-(2-hydroxyethyl)-4-methylthiazole: step 1/1. Functionally, catalyzes the phosphorylation of the hydroxyl group of 4-methyl-5-beta-hydroxyethylthiazole (THZ). This is Hydroxyethylthiazole kinase from Burkholderia pseudomallei (strain 1710b).